The following is a 297-amino-acid chain: F-box only protein 2 (297 aa).

The interval 1–47 (MDGDGDPESVSHPEEASPEEQPEEAGAEASAEEEQLREAEEEEEAEA) is disordered. The span at 16–47 (ASPEEQPEEAGAEASAEEEQLREAEEEEEAEA) shows a compositional bias: acidic residues. In terms of domain architecture, F-box spans 48 to 95 (VEYLAELPEPLLLRVLAELPATELVQACRLVCLRWKELVDGAPLWLLK). S106 bears the Phosphoserine mark. The region spanning 117–297 (FYFLSKRRRN…VTNSSVWVEP (181 aa)) is the FBA domain. A carbohydrate is bound by residues 214 to 216 (RTD) and 279 to 280 (YW).

As to quaternary structure, component of the SCF(FBXO2) complex consisting of CUL1, RBX1, SKP1 and FBXO2. Predominantly detected as heterodimer with SKP1; the heterodimer with SKP1 is not part of the SCF(FBXO2) complex. As to expression, detected in brain and cochlea, in epithelial support cells and hair cells of the organ of Corti (at protein level).

It localises to the cytoplasm. The protein resides in the microsome membrane. It participates in protein modification; protein ubiquitination. In terms of biological role, substrate recognition component of a SCF (SKP1-CUL1-F-box protein) E3 ubiquitin-protein ligase complex that mediates the ubiquitination and subsequent proteasomal degradation of target proteins. Involved in the endoplasmic reticulum-associated degradation pathway (ERAD) for misfolded lumenal proteins by recognizing and binding sugar chains on unfolded glycoproteins that are retrotranslocated into the cytosol and promoting their ubiquitination and subsequent degradation. Prevents formation of cytosolic aggregates of unfolded glycoproteins that have been retrotranslocated into the cytosol. Able to recognize and bind denatured glycoproteins, preferentially those of the high-mannose type. The polypeptide is F-box only protein 2 (Fbxo2) (Mus musculus (Mouse)).